Reading from the N-terminus, the 129-residue chain is ATP synthase epsilon chain (129 aa).

This sequence belongs to the ATPase epsilon chain family. F-type ATPases have 2 components, CF(1) - the catalytic core - and CF(0) - the membrane proton channel. CF(1) has five subunits: alpha(3), beta(3), gamma(1), delta(1), epsilon(1). CF(0) has three main subunits: a, b and c.

The protein localises to the cell inner membrane. Functionally, produces ATP from ADP in the presence of a proton gradient across the membrane. This Nitratiruptor sp. (strain SB155-2) protein is ATP synthase epsilon chain.